We begin with the raw amino-acid sequence, 125 residues long: Protein ApaG (125 aa).

The region spanning 1–125 is the ApaG domain; the sequence is MIDAPRIIVQ…FRLAIPSLIN (125 aa).

This Edwardsiella ictaluri (strain 93-146) protein is Protein ApaG.